A 1068-amino-acid polypeptide reads, in one-letter code: Tricorn protease homolog (1068 aa).

The segment at 61-326 is six-bladed beta propeller; the sequence is MKAYYMYPDI…DSLTKLDINL (266 aa). The tract at residues 338 to 686 is seven-bladed beta propeller; that stretch reads VNVMEYMNEA…RKGGVIDLSR (349 aa). The tract at residues 692 to 762 is C-1; that stretch reads EPEKEWRQML…RTSHSYETAY (71 aa). Residue His-756 is the Charge relay system of the active site. Residues 771-864 are PDZ-like; that stretch reads SVGGLGAEFE…RVTVKVLKDE (94 aa). The tract at residues 865-1068 is C-2; sequence RFLIYRYWVE…TAIELALKQL (204 aa). Residue Gly-927 participates in substrate binding. Ser-974 (nucleophile) is an active-site residue. The active-site Charge relay system is Glu-1032.

Belongs to the peptidase S41B family.

It is found in the cytoplasm. Its function is as follows. Degrades oligopeptides in a sequential manner. This chain is Tricorn protease homolog (tri), found in Saccharolobus solfataricus (strain ATCC 35092 / DSM 1617 / JCM 11322 / P2) (Sulfolobus solfataricus).